Reading from the N-terminus, the 95-residue chain is Exodeoxyribonuclease 7 small subunit (95 aa).

This sequence belongs to the XseB family. As to quaternary structure, heterooligomer composed of large and small subunits.

It is found in the cytoplasm. The enzyme catalyses Exonucleolytic cleavage in either 5'- to 3'- or 3'- to 5'-direction to yield nucleoside 5'-phosphates.. In terms of biological role, bidirectionally degrades single-stranded DNA into large acid-insoluble oligonucleotides, which are then degraded further into small acid-soluble oligonucleotides. This Corynebacterium aurimucosum (strain ATCC 700975 / DSM 44827 / CIP 107346 / CN-1) (Corynebacterium nigricans) protein is Exodeoxyribonuclease 7 small subunit.